Consider the following 261-residue polypeptide: Small ribosomal subunit protein uS2 (261 aa).

Ser2 bears the N-acetylserine mark. Positions 215–261 are disordered; it reads AEEAKTTEDVEEAAPVDADEWTGETEEVDWAESGATPAVEDAAASNW. Acidic residues predominate over residues 223 to 244; that stretch reads DVEEAAPVDADEWTGETEEVDW.

The protein belongs to the universal ribosomal protein uS2 family. As to quaternary structure, component of the small ribosomal subunit. Mature ribosomes consist of a small (40S) and a large (60S) subunit. The 40S subunit contains about 33 different proteins and 1 molecule of RNA (18S). The 60S subunit contains about 49 different proteins and 3 molecules of RNA (25S, 5.8S and 5S). Interacts with RPS21.

The protein localises to the cytoplasm. Required for the assembly and/or stability of the 40S ribosomal subunit. Required for the processing of the 20S rRNA-precursor to mature 18S rRNA in a late step of the maturation of 40S ribosomal subunits. The chain is Small ribosomal subunit protein uS2 from Scheffersomyces stipitis (strain ATCC 58785 / CBS 6054 / NBRC 10063 / NRRL Y-11545) (Yeast).